Consider the following 122-residue polypeptide: Large ribosomal subunit protein uL14 (122 aa).

The protein belongs to the universal ribosomal protein uL14 family. Part of the 50S ribosomal subunit. Forms a cluster with proteins L3 and L19. In the 70S ribosome, L14 and L19 interact and together make contacts with the 16S rRNA in bridges B5 and B8.

Functionally, binds to 23S rRNA. Forms part of two intersubunit bridges in the 70S ribosome. The protein is Large ribosomal subunit protein uL14 of Cellvibrio japonicus (strain Ueda107) (Pseudomonas fluorescens subsp. cellulosa).